The sequence spans 223 residues: MLDKVKGRLIVSCQALENEPLHSPFIMGRMAKAAMEGGAVGIRAQGVEDIIEIKKVTGLPVIGIIKRNYEDSDIYITPTKKEVDELLTTGCEMIALDATNRVRPNNEDLKELIKYIKENGVLVMADISNYDEAIKAQEYGVDCVSTTLSGYTPYTKTLEGPDFVLMERLVKDLEIPVIAEGKVNTPQDLKKVFELGVHSSVVGSAITRPQLITEKFVKAIEIN.

Belongs to the NanE family.

It catalyses the reaction an N-acyl-D-glucosamine 6-phosphate = an N-acyl-D-mannosamine 6-phosphate. The protein operates within amino-sugar metabolism; N-acetylneuraminate degradation; D-fructose 6-phosphate from N-acetylneuraminate: step 3/5. Functionally, converts N-acetylmannosamine-6-phosphate (ManNAc-6-P) to N-acetylglucosamine-6-phosphate (GlcNAc-6-P). This is Putative N-acetylmannosamine-6-phosphate 2-epimerase from Clostridioides difficile (strain 630) (Peptoclostridium difficile).